The following is a 156-amino-acid chain: Rhombotin-1 (156 aa).

2 LIM zinc-binding domains span residues 22–84 (KGCA…LFGT) and 86–148 (GNCA…GQLN).

The protein localises to the nucleus. May be involved in gene regulation within neural lineage cells potentially by direct DNA binding or by binding to other transcription factors. This is Rhombotin-1 from Xenopus laevis (African clawed frog).